Here is an 84-residue protein sequence, read N- to C-terminus: Putative membrane protein insertion efficiency factor (84 aa).

The tract at residues 64-84 (GGSGYDPPPPRHQPRKWKCEE) is disordered. Over residues 75–84 (HQPRKWKCEE) the composition is skewed to basic residues.

This sequence belongs to the UPF0161 family.

It localises to the cell inner membrane. Functionally, could be involved in insertion of integral membrane proteins into the membrane. The chain is Putative membrane protein insertion efficiency factor from Caulobacter vibrioides (strain ATCC 19089 / CIP 103742 / CB 15) (Caulobacter crescentus).